We begin with the raw amino-acid sequence, 113 residues long: uncharacterized protein (113 aa).

The N-terminal stretch at 1–29 is a signal peptide; sequence MLVVYMCIWVLYLLLFLFLFLFIASPASL. 2 consecutive transmembrane segments (helical) span residues 34 to 54 and 56 to 76; these read THIL…CAFF and QVLC…FYFF.

Its subcellular location is the membrane. This is an uncharacterized protein from Saccharomyces cerevisiae (strain ATCC 204508 / S288c) (Baker's yeast).